A 130-amino-acid chain; its full sequence is Phosphoribosyl-ATP pyrophosphatase (130 aa).

This sequence belongs to the PRA-PH family.

The protein localises to the cytoplasm. It carries out the reaction 1-(5-phospho-beta-D-ribosyl)-ATP + H2O = 1-(5-phospho-beta-D-ribosyl)-5'-AMP + diphosphate + H(+). Its pathway is amino-acid biosynthesis; L-histidine biosynthesis; L-histidine from 5-phospho-alpha-D-ribose 1-diphosphate: step 2/9. This is Phosphoribosyl-ATP pyrophosphatase from Albidiferax ferrireducens (strain ATCC BAA-621 / DSM 15236 / T118) (Rhodoferax ferrireducens).